A 776-amino-acid polypeptide reads, in one-letter code: Methionine--tRNA ligase (776 aa).

The 'HIGH' region motif lies at 10–20; that stretch reads PYSNGPIHLGH. 4 residues coordinate Zn(2+): C143, C146, C156, and C159. The 'KMSKS' region motif lies at 375–379; sequence KFSKS. K378 is an ATP binding site. Residues 676 to 776 enclose the tRNA-binding domain; the sequence is DFAKLDMRVG…KPISLGSKVR (101 aa).

It belongs to the class-I aminoacyl-tRNA synthetase family. MetG type 1 subfamily. Homodimer. Zn(2+) is required as a cofactor.

Its subcellular location is the cytoplasm. It carries out the reaction tRNA(Met) + L-methionine + ATP = L-methionyl-tRNA(Met) + AMP + diphosphate. In terms of biological role, is required not only for elongation of protein synthesis but also for the initiation of all mRNA translation through initiator tRNA(fMet) aminoacylation. The polypeptide is Methionine--tRNA ligase (metG) (Nanoarchaeum equitans (strain Kin4-M)).